The following is a 155-amino-acid chain: Small ribosomal subunit protein uS7c (155 aa).

This sequence belongs to the universal ribosomal protein uS7 family. In terms of assembly, part of the 30S ribosomal subunit.

Its subcellular location is the plastid. It localises to the chloroplast. In terms of biological role, one of the primary rRNA binding proteins, it binds directly to 16S rRNA where it nucleates assembly of the head domain of the 30S subunit. This is Small ribosomal subunit protein uS7c (rps7) from Yucca glauca (Soapweed yucca).